The following is a 428-amino-acid chain: MATAFAPTKLTATVPLHGSHENRLLLPIRLAPPSSFLGSTRSLSLRRLNHSNATRRSPVVSVQEVVKEKQSTNNTSLLITKEEGLELYEDMILGRSFEDMCAQMYYRGKMFGFVHLYNGQEAVSTGFIKLLTKSDSVVSTYRDHVHALSKGVSARAVMSELFGKVTGCCRGQGGSMHMFSKEHNMLGGFAFIGEGIPVATGAAFSSKYRREVLKQDCDDVTVAFFGDGTCNNGQFFECLNMAALYKLPIIFVVENNLWAIGMSHLRATSDPEIWKKGPAFGMPGVHVDGMDVLKVREVAKEAVTRARRGEGPTLVECETYRFRGHSLADPDELRDAAEKAKYAARDPIAALKKYLIENKLAKEAELKSIEKKIDELVEEAVEFADASPQPGRSQLLENVFADPKGFGIGPDGRYRCEDPKFTEGTAQV.

Residues 1 to 61 (MATAFAPTKL…NATRRSPVVS (61 aa)) constitute a chloroplast transit peptide. Pyruvate contacts are provided by H115, Y141, R142, A190, I192, D227, G228, and N256. Residues Y141, R142, A190, I192, D227, G228, N256, and H325 each contribute to the thiamine diphosphate site. Mg(2+) is bound at residue D227. Position 256 (N256) interacts with Mg(2+).

Tetramer of 2 alpha and 2 beta subunits. Thiamine diphosphate is required as a cofactor. Requires Mg(2+) as cofactor.

The protein localises to the plastid. It is found in the chloroplast. The enzyme catalyses N(6)-[(R)-lipoyl]-L-lysyl-[protein] + pyruvate + H(+) = N(6)-[(R)-S(8)-acetyldihydrolipoyl]-L-lysyl-[protein] + CO2. Its function is as follows. The pyruvate dehydrogenase complex catalyzes the overall conversion of pyruvate to acetyl-CoA and CO(2). It contains multiple copies of three enzymatic components: pyruvate dehydrogenase (E1), dihydrolipoamide acetyltransferase (E2) and lipoamide dehydrogenase (E3). This chain is Pyruvate dehydrogenase E1 component subunit alpha-3, chloroplastic (PDH-E1 ALPHA), found in Arabidopsis thaliana (Mouse-ear cress).